Consider the following 255-residue polypeptide: Triosephosphate isomerase (255 aa).

9–11 contacts substrate; that stretch reads NWK. The active-site Electrophile is His95. Residue Glu167 is the Proton acceptor of the active site. Substrate is bound by residues Gly173, Ser212, and 233-234; that span reads GG.

The protein belongs to the triosephosphate isomerase family. In terms of assembly, homodimer.

The protein resides in the cytoplasm. It catalyses the reaction D-glyceraldehyde 3-phosphate = dihydroxyacetone phosphate. The protein operates within carbohydrate biosynthesis; gluconeogenesis. It participates in carbohydrate degradation; glycolysis; D-glyceraldehyde 3-phosphate from glycerone phosphate: step 1/1. Its function is as follows. Involved in the gluconeogenesis. Catalyzes stereospecifically the conversion of dihydroxyacetone phosphate (DHAP) to D-glyceraldehyde-3-phosphate (G3P). The chain is Triosephosphate isomerase from Yersinia pseudotuberculosis serotype O:1b (strain IP 31758).